A 137-amino-acid chain; its full sequence is Large ribosomal subunit protein uL16 (137 aa).

It belongs to the universal ribosomal protein uL16 family. In terms of assembly, part of the 50S ribosomal subunit.

Its function is as follows. Binds 23S rRNA and is also seen to make contacts with the A and possibly P site tRNAs. This Ectopseudomonas mendocina (strain ymp) (Pseudomonas mendocina) protein is Large ribosomal subunit protein uL16.